Here is a 564-residue protein sequence, read N- to C-terminus: Protein NRT1/ PTR FAMILY 5.16 (564 aa).

2 helical membrane passes run phenylalanine 49–serine 69 and tryptophan 80–glycine 100. Position 104 is a phosphothreonine (threonine 104). The next 10 helical transmembrane spans lie at leucine 110–leucine 130, phenylalanine 145–glycine 165, phenylalanine 192–valine 212, tryptophan 220–phenylalanine 240, isoleucine 327–phenylalanine 347, isoleucine 358–phenylalanine 378, isoleucine 408–lysine 428, isoleucine 450–glycine 470, isoleucine 486–isoleucine 506, and tyrosine 533–serine 553.

It belongs to the major facilitator superfamily. Proton-dependent oligopeptide transporter (POT/PTR) (TC 2.A.17) family. Expressed in shoots and roots.

It is found in the membrane. The sequence is that of Protein NRT1/ PTR FAMILY 5.16 (NPF5.16) from Arabidopsis thaliana (Mouse-ear cress).